A 230-amino-acid chain; its full sequence is Type II restriction enzyme NlaIII (230 aa).

It catalyses the reaction Endonucleolytic cleavage of DNA to give specific double-stranded fragments with terminal 5'-phosphates.. A P subtype restriction enzyme that recognizes the double-stranded sequence 5'-CATG-3' and cleaves after G-4. This chain is Type II restriction enzyme NlaIII (nlaIIIR), found in Neisseria lactamica.